The sequence spans 740 residues: Probable type IV piliation system protein DR_0774 (740 aa).

A signal peptide spans 1-20 (MNKRHALLLTAVLGMATAYA).

Belongs to the bacterial secretin family.

The protein resides in the cell envelope. Could be part of the type IV piliation system (T4P). May contribute at the cohesion between the S-layer and the outer membrane by forming oligomers. Could also be the main channel through which trafficking is managed. The protein is Probable type IV piliation system protein DR_0774 of Deinococcus radiodurans (strain ATCC 13939 / DSM 20539 / JCM 16871 / CCUG 27074 / LMG 4051 / NBRC 15346 / NCIMB 9279 / VKM B-1422 / R1).